The following is a 401-amino-acid chain: Chalcone synthase 1 (401 aa).

Cys-168 is an active-site residue.

This sequence belongs to the thiolase-like superfamily. Chalcone/stilbene synthases family.

It carries out the reaction (E)-4-coumaroyl-CoA + 3 malonyl-CoA + 3 H(+) = 2',4,4',6'-tetrahydroxychalcone + 3 CO2 + 4 CoA. The protein operates within secondary metabolite biosynthesis; flavonoid biosynthesis. Its function is as follows. The primary product of this enzyme is 4,2',4',6'-tetrahydroxychalcone (also termed naringenin-chalcone or chalcone) which can under specific conditions spontaneously isomerize into naringenin. The sequence is that of Chalcone synthase 1 (CHS1) from Sorghum bicolor (Sorghum).